A 160-amino-acid chain; its full sequence is Major pollen allergen Bet v 1-C (160 aa).

4 residues coordinate brassinolide: Lys-55, Tyr-82, Tyr-84, and Asn-101.

This sequence belongs to the BetVI family.

The protein resides in the cytoplasm. Functionally, may be a general steroid carrier protein. The chain is Major pollen allergen Bet v 1-C (BETV1C) from Betula pendula (European white birch).